Reading from the N-terminus, the 346-residue chain is Holliday junction branch migration complex subunit RuvB (346 aa).

The large ATPase domain (RuvB-L) stretch occupies residues Met1–Tyr182. ATP-binding positions include Leu21, Arg22, Gly63, Lys66, Thr67, Thr68, Glu129–Phe131, Arg172, Tyr182, and Arg219. Thr67 is a binding site for Mg(2+). The interval Thr183–Leu253 is small ATPAse domain (RuvB-S). The interval Asn256 to Asn346 is head domain (RuvB-H). Arg292, Arg311, and Arg316 together coordinate DNA.

This sequence belongs to the RuvB family. As to quaternary structure, homohexamer. Forms an RuvA(8)-RuvB(12)-Holliday junction (HJ) complex. HJ DNA is sandwiched between 2 RuvA tetramers; dsDNA enters through RuvA and exits via RuvB. An RuvB hexamer assembles on each DNA strand where it exits the tetramer. Each RuvB hexamer is contacted by two RuvA subunits (via domain III) on 2 adjacent RuvB subunits; this complex drives branch migration. In the full resolvosome a probable DNA-RuvA(4)-RuvB(12)-RuvC(2) complex forms which resolves the HJ.

The protein resides in the cytoplasm. It carries out the reaction ATP + H2O = ADP + phosphate + H(+). Functionally, the RuvA-RuvB-RuvC complex processes Holliday junction (HJ) DNA during genetic recombination and DNA repair, while the RuvA-RuvB complex plays an important role in the rescue of blocked DNA replication forks via replication fork reversal (RFR). RuvA specifically binds to HJ cruciform DNA, conferring on it an open structure. The RuvB hexamer acts as an ATP-dependent pump, pulling dsDNA into and through the RuvAB complex. RuvB forms 2 homohexamers on either side of HJ DNA bound by 1 or 2 RuvA tetramers; 4 subunits per hexamer contact DNA at a time. Coordinated motions by a converter formed by DNA-disengaged RuvB subunits stimulates ATP hydrolysis and nucleotide exchange. Immobilization of the converter enables RuvB to convert the ATP-contained energy into a lever motion, pulling 2 nucleotides of DNA out of the RuvA tetramer per ATP hydrolyzed, thus driving DNA branch migration. The RuvB motors rotate together with the DNA substrate, which together with the progressing nucleotide cycle form the mechanistic basis for DNA recombination by continuous HJ branch migration. Branch migration allows RuvC to scan DNA until it finds its consensus sequence, where it cleaves and resolves cruciform DNA. The protein is Holliday junction branch migration complex subunit RuvB of Rhizobium leguminosarum bv. trifolii (strain WSM2304).